The sequence spans 36 residues: uncharacterized protein (36 aa).

The helical transmembrane segment at 13-35 (SVILSPFPCCVLKSYLTVIYISF) threads the bilayer.

Its subcellular location is the host membrane. This is an uncharacterized protein from Pseudoalteromonas espejiana (Bacteriophage PM2).